Here is a 407-residue protein sequence, read N- to C-terminus: Argininosuccinate synthase (407 aa).

ATP-binding positions include 12-20 (AFSGGLDTS) and alanine 39. 2 residues coordinate L-citrulline: tyrosine 90 and serine 95. Glycine 120 contributes to the ATP binding site. Threonine 122, asparagine 126, and aspartate 127 together coordinate L-aspartate. Asparagine 126 lines the L-citrulline pocket. The L-citrulline site is built by arginine 130, serine 181, serine 190, glutamate 266, and tyrosine 278.

The protein belongs to the argininosuccinate synthase family. Type 1 subfamily. As to quaternary structure, homotetramer.

It localises to the cytoplasm. It carries out the reaction L-citrulline + L-aspartate + ATP = 2-(N(omega)-L-arginino)succinate + AMP + diphosphate + H(+). The protein operates within amino-acid biosynthesis; L-arginine biosynthesis; L-arginine from L-ornithine and carbamoyl phosphate: step 2/3. The chain is Argininosuccinate synthase from Nitrosospira multiformis (strain ATCC 25196 / NCIMB 11849 / C 71).